An 870-amino-acid chain; its full sequence is DNA topoisomerase 1 (870 aa).

Residues Met1 to Ala128 form the Toprim domain. The Topo IA-type catalytic domain occupies Tyr143–Thr578. Positions Ser180–Gln185 are interaction with DNA. The O-(5'-phospho-DNA)-tyrosine intermediate role is filled by Tyr299. 3 C4-type zinc fingers span residues Cys603–Cys627, Cys693–Cys717, and Cys784–Cys807.

It belongs to the type IA topoisomerase family. Monomer.

It carries out the reaction ATP-independent breakage of single-stranded DNA, followed by passage and rejoining.. Its function is as follows. Releases the supercoiling and torsional tension of DNA, which is introduced during the DNA replication and transcription, by transiently cleaving and rejoining one strand of the DNA duplex. Introduces a single-strand break via transesterification at a target site in duplex DNA. The scissile phosphodiester is attacked by the catalytic tyrosine of the enzyme, resulting in the formation of a DNA-(5'-phosphotyrosyl)-enzyme intermediate and the expulsion of a 3'-OH DNA strand. The free DNA strand then undergoes passage around the unbroken strand, thus removing DNA supercoils. Finally, in the religation step, the DNA 3'-OH attacks the covalent intermediate to expel the active-site tyrosine and restore the DNA phosphodiester backbone. The chain is DNA topoisomerase 1 (topX) from Bacillus anthracis.